Consider the following 405-residue polypeptide: Type III polyketide synthase 10 (405 aa).

Residues 1–18 show a composition bias toward polar residues; sequence MVSTNAGGIASKQASSMA. Residues 1 to 20 form a disordered region; that stretch reads MVSTNAGGIASKQASSMAPN. Residue cysteine 170 is the Nucleophile of the active site.

Belongs to the thiolase-like superfamily. Chalcone/stilbene synthases family. In terms of assembly, interacts with STS1. As to expression, expressed in adult flowers.

It is found in the endoplasmic reticulum. Functionally, plant type III polyketide synthases (PKSs) that catalyzes the condensation of fatty acyl-CoA with malonyl-CoA to generate triketide and tetraketide alpha-pyrones, the main components of pollen exine and potential sporopollenin precursors. May be involved in the synthesis of sporopollenin precursors in tapetal cells to regulate pollen wall formation. Required for exine and Ubisch body formation in anthers. Does not possess chalcone synthase (CHS) activity in vitro with the substrates 4-coumaroyl-CoA and malonyl-CoA. The chain is Type III polyketide synthase 10 from Oryza sativa subsp. japonica (Rice).